The primary structure comprises 155 residues: Protein-export protein SecB (155 aa).

This sequence belongs to the SecB family. Homotetramer, a dimer of dimers. One homotetramer interacts with 1 SecA dimer.

It is found in the cytoplasm. One of the proteins required for the normal export of preproteins out of the cell cytoplasm. It is a molecular chaperone that binds to a subset of precursor proteins, maintaining them in a translocation-competent state. It also specifically binds to its receptor SecA. The sequence is that of Protein-export protein SecB from Escherichia coli O139:H28 (strain E24377A / ETEC).